A 551-amino-acid chain; its full sequence is Nucleobase-ascorbate transporter 3 (551 aa).

A disordered region spans residues 1 to 30 (MVETGHHHQHPPAPAAAGHPPVPSMAMARN). Helical transmembrane passes span 56–76 (ETVV…VLIA), 92–111 (RVIQ…QTLI), 117–136 (TVMG…IRDY), 158–178 (SLII…WGNL), 179–199 (IRIF…LGLF), 202–222 (GFPL…LLII), 242–262 (ALLV…VSGA), 306–326 (VFGM…VFFA), 390–410 (FFMI…SIPL), 412–432 (IFAG…ISFI), 442–462 (NMYV…YFLA), and 481–501 (DILN…ATIL).

The protein belongs to the nucleobase:cation symporter-2 (NCS2) (TC 2.A.40) family. In terms of tissue distribution, expressed in the apical meristem 4 days after imbibition (DAI). Expressed in the major veins of rosette leaves and pedicels. Expressed in the root central cylinder, root meristems, root tips and lateral root primordia.

The protein localises to the membrane. The polypeptide is Nucleobase-ascorbate transporter 3 (NAT3) (Arabidopsis thaliana (Mouse-ear cress)).